A 92-amino-acid chain; its full sequence is DNA-directed RNA polymerase subunit Rpo11 (92 aa).

The protein belongs to the archaeal Rpo11/eukaryotic RPB11/RPC19 RNA polymerase subunit family. In terms of assembly, part of the RNA polymerase complex.

The protein resides in the cytoplasm. The catalysed reaction is RNA(n) + a ribonucleoside 5'-triphosphate = RNA(n+1) + diphosphate. Its function is as follows. DNA-dependent RNA polymerase (RNAP) catalyzes the transcription of DNA into RNA using the four ribonucleoside triphosphates as substrates. The chain is DNA-directed RNA polymerase subunit Rpo11 from Saccharolobus islandicus (strain Y.N.15.51 / Yellowstone #2) (Sulfolobus islandicus).